A 328-amino-acid polypeptide reads, in one-letter code: E3 ubiquitin-protein ligase SINA-like 5 (328 aa).

The segment at 1 to 77 (MARSGGNDGH…GSPKSSQPVK (77 aa)) is disordered. Composition is skewed to acidic residues over residues 10–20 (HEEELDPELFE) and 27–62 (GYED…ENVT). The span at 63–77 (TDEQSGSPKSSQPVK) shows a compositional bias: polar residues. Residues 86–122 (CPTCCEPLKRPIYQCSNGHLACSSCCQKLNKKCSFCR) form an RING-type; degenerate zinc finger. Residues 136–324 (VIEASIVPCP…MQICIAYGYK (189 aa)) form an SBD region. Residues 139 to 197 (ASIVPCPNAKHGCKETTTYCNQSSHEKVCKFVRCSCPVSNCNYVSSYSNLKSHACSTAH) form an SIAH-type; degenerate zinc finger. Residues Cys-144, Cys-151, His-163, Cys-167, Cys-174, Cys-179, His-191, and His-197 each contribute to the Zn(2+) site.

It belongs to the SINA (Seven in absentia) family.

It catalyses the reaction S-ubiquitinyl-[E2 ubiquitin-conjugating enzyme]-L-cysteine + [acceptor protein]-L-lysine = [E2 ubiquitin-conjugating enzyme]-L-cysteine + N(6)-ubiquitinyl-[acceptor protein]-L-lysine.. It participates in protein modification; protein ubiquitination. Functionally, E3 ubiquitin-protein ligase that mediates ubiquitination and subsequent proteasomal degradation of target proteins. E3 ubiquitin ligases accept ubiquitin from an E2 ubiquitin-conjugating enzyme in the form of a thioester and then directly transfers the ubiquitin to targeted substrates. It probably triggers the ubiquitin-mediated degradation of different substrates. The polypeptide is E3 ubiquitin-protein ligase SINA-like 5 (Arabidopsis thaliana (Mouse-ear cress)).